We begin with the raw amino-acid sequence, 102 residues long: Small ribosomal subunit protein uS10 (102 aa).

Belongs to the universal ribosomal protein uS10 family. Part of the 30S ribosomal subunit.

Its function is as follows. Involved in the binding of tRNA to the ribosomes. The chain is Small ribosomal subunit protein uS10 from Methanobrevibacter smithii (strain ATCC 35061 / DSM 861 / OCM 144 / PS).